Reading from the N-terminus, the 338-residue chain is tRNA (cytidine(56)-2'-O)-methyltransferase (338 aa).

S-adenosyl-L-methionine contacts are provided by residues Leu79 and 105–109 (GSEKV). One can recognise an HD domain in the interval 188-295 (LINHVKSVKE…VAHADNLFAG (108 aa)).

The protein belongs to the aTrm56 family. As to quaternary structure, homodimer.

Its subcellular location is the cytoplasm. It catalyses the reaction cytidine(56) in tRNA + S-adenosyl-L-methionine = 2'-O-methylcytidine(56) in tRNA + S-adenosyl-L-homocysteine + H(+). Specifically catalyzes the AdoMet-dependent 2'-O-ribose methylation of cytidine at position 56 in tRNAs. This is tRNA (cytidine(56)-2'-O)-methyltransferase from Thermoplasma volcanium (strain ATCC 51530 / DSM 4299 / JCM 9571 / NBRC 15438 / GSS1).